A 73-amino-acid chain; its full sequence is MYVCLCQGVTDNQIRDAIYEGCCSYREVREATGVGTQCGKCACLAKQVVRETLNDLQSAQPVPAFGTTAFVAA.

[2Fe-2S] cluster-binding residues include Cys4 and Cys6. Positions 26 and 29 each coordinate phosphate. [2Fe-2S] cluster-binding residues include Cys38 and Cys41. Lys46 provides a ligand contact to phosphate.

Belongs to the Bfd family. In terms of assembly, monomer. Interacts with BfrB; up to 12 Bfd proteins can bind to the BfrB bacterioferritin complex (BFR). One Bfd protein binds to a BfrB dimer in the BFR, with the [2Fe-2S] cluster positioned about 22 Angstroms above the heme of BfrB. Does not interact with FtnA. It depends on [2Fe-2S] cluster as a cofactor. Phosphate serves as cofactor.

Required for mobilization of iron from the bacterioferritin (BFR) complex, composed of BfrB and FtnA in varying proportions; mobilization requires the [2Fe-2S] cluster of this protein. Reduction of the BfrB heme group occurs in the presence of Bfd, strongly suggesting that the BfrB-Bfd complex allows heme to mediate electron transfer from FPR to the Fe(3+) iron core in the BFR prior to its release as Fe(2+). In Pseudomonas aeruginosa (strain ATCC 15692 / DSM 22644 / CIP 104116 / JCM 14847 / LMG 12228 / 1C / PRS 101 / PAO1), this protein is Bacterioferritin-associated ferredoxin.